A 118-amino-acid chain; its full sequence is Large ribosomal subunit protein uL22 (118 aa).

Belongs to the universal ribosomal protein uL22 family. Part of the 50S ribosomal subunit.

This protein binds specifically to 23S rRNA; its binding is stimulated by other ribosomal proteins, e.g. L4, L17, and L20. It is important during the early stages of 50S assembly. It makes multiple contacts with different domains of the 23S rRNA in the assembled 50S subunit and ribosome. Its function is as follows. The globular domain of the protein is located near the polypeptide exit tunnel on the outside of the subunit, while an extended beta-hairpin is found that lines the wall of the exit tunnel in the center of the 70S ribosome. This Leuconostoc mesenteroides subsp. mesenteroides (strain ATCC 8293 / DSM 20343 / BCRC 11652 / CCM 1803 / JCM 6124 / NCDO 523 / NBRC 100496 / NCIMB 8023 / NCTC 12954 / NRRL B-1118 / 37Y) protein is Large ribosomal subunit protein uL22.